A 382-amino-acid polypeptide reads, in one-letter code: Flap endonuclease 1 (382 aa).

The N-domain stretch occupies residues 1 to 104 (MGIKGLSQVI…GELEKRTERR (104 aa)). Mg(2+) is bound at residue D34. DNA-binding residues include R47 and R70. Residues D86, E158, E160, D179, and D181 each coordinate Mg(2+). The I-domain stretch occupies residues 122-253 (EAEKFERRLV…KKAVELIKQH (132 aa)). DNA is bound at residue E158. Residues G231 and D233 each coordinate DNA. D233 is a Mg(2+) binding site. The interaction with PCNA stretch occupies residues 336–344 (TQGRIDSFF). The span at 359 to 368 (KAQEEAEKMK) shows a compositional bias: basic and acidic residues. The segment at 359–382 (KAQEEAEKMKKGGKKSGPPKKKAK) is disordered. Over residues 369-382 (KGGKKSGPPKKKAK) the composition is skewed to basic residues.

The protein belongs to the XPG/RAD2 endonuclease family. FEN1 subfamily. In terms of assembly, interacts with PCNA. Three molecules of crn-1 bind to one PCNA trimer with each molecule binding to one PCNA monomer. PCNA stimulates the nuclease activity without altering cleavage specificity. It depends on Mg(2+) as a cofactor. In terms of processing, phosphorylated. Phosphorylation upon DNA damage induces relocalization to the nuclear plasma.

Its subcellular location is the nucleus. It is found in the nucleolus. The protein localises to the nucleoplasm. The protein resides in the mitochondrion. Functionally, structure-specific nuclease with 5'-flap endonuclease and 5'-3' exonuclease activities involved in DNA replication and repair. During DNA replication, cleaves the 5'-overhanging flap structure that is generated by displacement synthesis when DNA polymerase encounters the 5'-end of a downstream Okazaki fragment. It enters the flap from the 5'-end and then tracks to cleave the flap base, leaving a nick for ligation. Also involved in the long patch base excision repair (LP-BER) pathway, by cleaving within the apurinic/apyrimidinic (AP) site-terminated flap. Acts as a genome stabilization factor that prevents flaps from equilibrating into structures that lead to duplications and deletions. Also possesses 5'-3' exonuclease activity on nicked or gapped double-stranded DNA, and exhibits RNase H activity. Also involved in replication and repair of rDNA and in repairing mitochondrial DNA. In Caenorhabditis briggsae, this protein is Flap endonuclease 1.